Reading from the N-terminus, the 173-residue chain is MTTIVCVRKDGKVAIGGDGQATLGNCVEKGTVRKVRRLYKDKVITGFAGSTADAFILRDLFEKKLELHQGHLVKSAVELAKEWRTERALRKLEAMMIVANESEFLLVSGSGDVIEPEQDVLAIGSGGNFAKSAALALLRTENNLTAKQIVAEALKIAGDIDIYSNHNHVIEEV.

Threonine 2 is an active-site residue. Na(+) is bound by residues glycine 158, aspartate 161, and serine 164.

It belongs to the peptidase T1B family. HslV subfamily. In terms of assembly, a double ring-shaped homohexamer of HslV is capped on each side by a ring-shaped HslU homohexamer. The assembly of the HslU/HslV complex is dependent on binding of ATP.

It is found in the cytoplasm. The catalysed reaction is ATP-dependent cleavage of peptide bonds with broad specificity.. Allosterically activated by HslU binding. In terms of biological role, protease subunit of a proteasome-like degradation complex believed to be a general protein degrading machinery. This chain is ATP-dependent protease subunit HslV, found in Haemophilus ducreyi (strain 35000HP / ATCC 700724).